Here is a 507-residue protein sequence, read N- to C-terminus: Maturase K (507 aa).

This sequence belongs to the intron maturase 2 family. MatK subfamily.

Its subcellular location is the plastid. It localises to the chloroplast. In terms of biological role, usually encoded in the trnK tRNA gene intron. Probably assists in splicing its own and other chloroplast group II introns. This Buxus microphylla (Littleleaf boxwood) protein is Maturase K.